Consider the following 730-residue polypeptide: MRVLPFLLPLIPVLLATTITDLPELVVVTVATENTDGLKRLLESAKAFDINIEVLGLGEKWNGGDTRIEQGGGQKIRILSDWIEKYKDASDTMIMFVDAYDVVFNADSTTILRKFFEHYSEKRLLFGAEPFCWPDQSLAPEYPIVEFGKRFLNSGLFMGYGPEMHKILKLKSVEDKDDDQLYYTMIYLDEKLRKELNMDLDSMSKIFQNLNGVIEDVELQFKEDGTPEAYNAAYNTKPLIVHGNGPSKSHLNYLGNYLGNRWNSQLGCRTCGLEVKESEEVPLIALNLFISKPIPFIEEVLQKIAEFDYPKEKIALYIYNNQPFSIKNIQDFLQKHGKSYYTKRVINGVTEIGDREARNEAIEWNKARNVEFAFLMDGDAYFSEPKVIKDLIQYSKTYDVGIIAPMIGQPGKLFTNFWGAIAANGYYARSEDYMAIVKGNRVGYWNVPFITSAVLFNKEKLEAMKDAYSYNKNLDPDMSMCKFARDNGHFLYIDNEKYYGFLIVSDEYAETVTEGKWHPEMWQIFENRELWEARYIHPGYHKIMEPEHVVDQACPDVYDFPLMSERFCEELIEEMEGFGRWSDGSNNDKRLAGGYENVPTRDIHMNQVGFERQWLYFMDTYVRPVQEKTFIGYYHQPVESNMMFVVRYKPEEQPSLRPHHDASTFSIDIALNKKGRDYEGGGVRYIRYNCTVPADEVGYAMMFPGRLTHLHEGLATTKGTRYIMVSFINP.

Positions 1–16 (MRVLPFLLPLIPVLLA) are cleaved as a signal peptide. Residues 20–280 (TDLPELVVVT…CGLEVKESEE (261 aa)) form a required for glycosyltransferase activity region. UDP contacts are provided by residues 30–32 (VAT) and 98–100 (DAY). Mn(2+) is bound by residues aspartate 98, aspartate 101, and histidine 242. 245–248 (GPSK) provides a ligand contact to UDP. An intrachain disulfide couples cysteine 268 to cysteine 271. The accessory region stretch occupies residues 281 to 507 (VPLIALNLFI…YYGFLIVSDE (227 aa)). Residues cysteine 554 and cysteine 690 are joined by a disulfide bond. 2-oxoglutarate-binding residues include arginine 590 and tyrosine 648. Residues 639–730 (ESNMMFVVRY…RYIMVSFINP (92 aa)) form the Fe2OG dioxygenase domain. 2 residues coordinate Fe cation: histidine 659 and aspartate 661. Residues 664–707 (TFSIDIALNKKGRDYEGGGVRYIRYNCTVPADEVGYAMMFPGRL) form an important for dimerization region. Asparagine 689 is a glycosylation site (N-linked (GlcNAc...) asparagine). Histidine 711 is a binding site for Fe cation. 2-oxoglutarate is bound at residue arginine 721.

As to quaternary structure, homodimer. The cofactor is Fe(2+). It depends on L-ascorbate as a cofactor. Mn(2+) is required as a cofactor.

Its subcellular location is the rough endoplasmic reticulum. The protein resides in the endoplasmic reticulum lumen. It localises to the endoplasmic reticulum membrane. It is found in the secreted. The protein localises to the extracellular space. It catalyses the reaction L-lysyl-[collagen] + 2-oxoglutarate + O2 = (5R)-5-hydroxy-L-lysyl-[collagen] + succinate + CO2. The catalysed reaction is (5R)-5-hydroxy-L-lysyl-[collagen] + UDP-alpha-D-galactose = (5R)-5-O-(beta-D-galactosyl)-5-hydroxy-L-lysyl-[collagen] + UDP + H(+). The enzyme catalyses (5R)-5-O-(beta-D-galactosyl)-5-hydroxy-L-lysyl-[collagen] + UDP-alpha-D-glucose = (5R)-5-O-[alpha-D-glucosyl-(1-&gt;2)-beta-D-galactosyl]-5-hydroxy-L-lysyl-[collagen] + UDP + H(+). In terms of biological role, multifunctional enzyme that catalyzes a series of post-translational modifications on Lys residues in procollagen. Catalyzes the formation of hydroxylysine residues in -Xaa-Lys-Gly- sequences in type IV collagens. Transfers galactose onto hydroxylysine groups, giving rise to galactosyl 5-hydroxylysine. Catalyzes the subsequent transfer of glucose moieties, giving rise to 1,2-glucosylgalactosyl-5-hydroxylysine residues. Essential for normal biosynthesis and secretion of type IV collagens. Essential for normal stability of the basement membrane. This is Multifunctional procollagen lysine hydroxylase and glycosyltransferase (let-268) from Caenorhabditis elegans.